The primary structure comprises 310 residues: Olfactory receptor 4C11 (310 aa).

At M1–K23 the chain is on the extracellular side. N-linked (GlcNAc...) asparagine glycosylation is present at N4. A helical membrane pass occupies residues I24–I47. At K48–S55 the chain is on the cytoplasmic side. The chain crosses the membrane as a helical span at residues P56–P77. At R78 to Q98 the chain is on the extracellular side. The cysteines at positions 95 and 187 are disulfide-linked. The chain crosses the membrane as a helical span at residues V99–V118. Topologically, residues D119 to Q137 are cytoplasmic. A helical transmembrane segment spans residues V138–A156. The Extracellular portion of the chain corresponds to Q157–I193. The helical transmembrane segment at N194–I217 threads the bilayer. The Cytoplasmic portion of the chain corresponds to V218–K233. Residues A234–Y256 traverse the membrane as a helical segment. The Extracellular portion of the chain corresponds to T257–K267. The chain crosses the membrane as a helical span at residues M268 to L287. The Cytoplasmic segment spans residues R288 to G310.

Belongs to the G-protein coupled receptor 1 family.

The protein localises to the cell membrane. Odorant receptor. This is Olfactory receptor 4C11 (OR4C11) from Homo sapiens (Human).